The sequence spans 205 residues: Ras-related protein RABB1a (205 aa).

13–20 (GDTGVGKS) provides a ligand contact to GTP. The Effector region motif lies at 35–43 (HDLTIGVEF). GTP-binding positions include 61-65 (DTAGQ), 119-122 (NKCD), and 149-150 (SA). The tract at residues 179–205 (ANEPGITPGPFGGKDASSSQQRRGCCG) is disordered. Positions 194-205 (ASSSQQRRGCCG) are enriched in polar residues. Residues Cys-203 and Cys-204 are each lipidated (S-geranylgeranyl cysteine).

This sequence belongs to the small GTPase superfamily. Rab family.

Its subcellular location is the cell membrane. Intracellular vesicle trafficking and protein transport. The sequence is that of Ras-related protein RABB1a (RABB1A) from Arabidopsis thaliana (Mouse-ear cress).